Consider the following 320-residue polypeptide: ATP-dependent 6-phosphofructokinase (320 aa).

Residue Gly-12 coordinates ATP. 22 to 26 (RGVVR) provides a ligand contact to ADP. ATP-binding positions include 73-74 (RF) and 103-106 (GDGS). Asp-104 lines the Mg(2+) pocket. 126 to 128 (TID) serves as a coordination point for substrate. The active-site Proton acceptor is the Asp-128. Residue Arg-155 coordinates ADP. Substrate-binding positions include Arg-163 and 170 to 172 (MGR). Residues 186–188 (GCE), Lys-212, and 214–216 (KKH) contribute to the ADP site. Substrate is bound by residues Glu-223, Arg-244, and 250–253 (HIQR).

The protein belongs to the phosphofructokinase type A (PFKA) family. ATP-dependent PFK group I subfamily. Prokaryotic clade 'B1' sub-subfamily. Homotetramer. It depends on Mg(2+) as a cofactor.

The protein resides in the cytoplasm. The catalysed reaction is beta-D-fructose 6-phosphate + ATP = beta-D-fructose 1,6-bisphosphate + ADP + H(+). It participates in carbohydrate degradation; glycolysis; D-glyceraldehyde 3-phosphate and glycerone phosphate from D-glucose: step 3/4. Allosterically activated by ADP and other diphosphonucleosides, and allosterically inhibited by phosphoenolpyruvate. Functionally, catalyzes the phosphorylation of D-fructose 6-phosphate to fructose 1,6-bisphosphate by ATP, the first committing step of glycolysis. The polypeptide is ATP-dependent 6-phosphofructokinase (Blochmanniella floridana).